The following is a 553-amino-acid chain: Formate--tetrahydrofolate ligase (553 aa).

Position 62-69 (62-69) interacts with ATP; the sequence is TPAGEGKS.

This sequence belongs to the formate--tetrahydrofolate ligase family.

It catalyses the reaction (6S)-5,6,7,8-tetrahydrofolate + formate + ATP = (6R)-10-formyltetrahydrofolate + ADP + phosphate. Its pathway is one-carbon metabolism; tetrahydrofolate interconversion. This Limosilactobacillus reuteri subsp. reuteri (strain JCM 1112) (Lactobacillus reuteri) protein is Formate--tetrahydrofolate ligase.